Consider the following 407-residue polypeptide: Tryptophan synthase beta chain (407 aa).

Position 91 is an N6-(pyridoxal phosphate)lysine (lysine 91).

The protein belongs to the TrpB family. Tetramer of two alpha and two beta chains. It depends on pyridoxal 5'-phosphate as a cofactor.

It carries out the reaction (1S,2R)-1-C-(indol-3-yl)glycerol 3-phosphate + L-serine = D-glyceraldehyde 3-phosphate + L-tryptophan + H2O. Its pathway is amino-acid biosynthesis; L-tryptophan biosynthesis; L-tryptophan from chorismate: step 5/5. The beta subunit is responsible for the synthesis of L-tryptophan from indole and L-serine. The sequence is that of Tryptophan synthase beta chain from Streptococcus pneumoniae (strain 70585).